Here is a 126-residue protein sequence, read N- to C-terminus: Large ribosomal subunit protein bL12 (126 aa).

This sequence belongs to the bacterial ribosomal protein bL12 family. In terms of assembly, homodimer. Part of the ribosomal stalk of the 50S ribosomal subunit. Forms a multimeric L10(L12)X complex, where L10 forms an elongated spine to which 2 to 4 L12 dimers bind in a sequential fashion. Binds GTP-bound translation factors.

In terms of biological role, forms part of the ribosomal stalk which helps the ribosome interact with GTP-bound translation factors. Is thus essential for accurate translation. This chain is Large ribosomal subunit protein bL12, found in Prosthecochloris aestuarii (strain DSM 271 / SK 413).